The primary structure comprises 106 residues: MTASIAQQKIRIRLKAFDRRMLDLSCDKIIQTADTTSASAIGPIPLPTKRKIYCVLRSPHVDKDSREHFETRTHRRIIDIYSPSAKTIDALMKLDLPSGVDIEVKL.

It belongs to the universal ribosomal protein uS10 family. Part of the 30S ribosomal subunit.

In terms of biological role, involved in the binding of tRNA to the ribosomes. The polypeptide is Small ribosomal subunit protein uS10 (Prochlorococcus marinus (strain MIT 9301)).